Here is an 86-residue protein sequence, read N- to C-terminus: DNA-directed RNA polymerase subunit omega (86 aa).

This sequence belongs to the RNA polymerase subunit omega family. In terms of assembly, the RNAP catalytic core consists of 2 alpha, 1 beta, 1 beta' and 1 omega subunit. When a sigma factor is associated with the core the holoenzyme is formed, which can initiate transcription.

The enzyme catalyses RNA(n) + a ribonucleoside 5'-triphosphate = RNA(n+1) + diphosphate. In terms of biological role, promotes RNA polymerase assembly. Latches the N- and C-terminal regions of the beta' subunit thereby facilitating its interaction with the beta and alpha subunits. This is DNA-directed RNA polymerase subunit omega from Agathobacter rectalis (strain ATCC 33656 / DSM 3377 / JCM 17463 / KCTC 5835 / VPI 0990) (Eubacterium rectale).